Reading from the N-terminus, the 94-residue chain is Co-chaperonin GroES (94 aa).

The protein belongs to the GroES chaperonin family. In terms of assembly, heptamer of 7 subunits arranged in a ring. Interacts with the chaperonin GroEL.

The protein localises to the cytoplasm. In terms of biological role, together with the chaperonin GroEL, plays an essential role in assisting protein folding. The GroEL-GroES system forms a nano-cage that allows encapsulation of the non-native substrate proteins and provides a physical environment optimized to promote and accelerate protein folding. GroES binds to the apical surface of the GroEL ring, thereby capping the opening of the GroEL channel. The protein is Co-chaperonin GroES of Clostridioides difficile (Peptoclostridium difficile).